Here is a 225-residue protein sequence, read N- to C-terminus: Orotate phosphoribosyltransferase (225 aa).

5-phospho-alpha-D-ribose 1-diphosphate is bound by residues lysine 26, 73–74, arginine 100, lysine 101, lysine 104, histidine 106, and 127–135; these read YK and EDVTTAGTS. Orotate contacts are provided by threonine 131 and arginine 160.

It belongs to the purine/pyrimidine phosphoribosyltransferase family. PyrE subfamily. Homodimer. It depends on Mg(2+) as a cofactor.

The enzyme catalyses orotidine 5'-phosphate + diphosphate = orotate + 5-phospho-alpha-D-ribose 1-diphosphate. It participates in pyrimidine metabolism; UMP biosynthesis via de novo pathway; UMP from orotate: step 1/2. In terms of biological role, catalyzes the transfer of a ribosyl phosphate group from 5-phosphoribose 1-diphosphate to orotate, leading to the formation of orotidine monophosphate (OMP). This is Orotate phosphoribosyltransferase from Lachnoclostridium phytofermentans (strain ATCC 700394 / DSM 18823 / ISDg) (Clostridium phytofermentans).